A 218-amino-acid chain; its full sequence is Thiopurine S-methyltransferase (218 aa).

4 residues coordinate S-adenosyl-L-methionine: Trp-10, Leu-45, Glu-66, and Arg-123.

The protein belongs to the class I-like SAM-binding methyltransferase superfamily. TPMT family.

It localises to the cytoplasm. It catalyses the reaction S-adenosyl-L-methionine + a thiopurine = S-adenosyl-L-homocysteine + a thiopurine S-methylether.. In Pseudomonas aeruginosa (strain LESB58), this protein is Thiopurine S-methyltransferase.